We begin with the raw amino-acid sequence, 70 residues long: Putative membrane protein insertion efficiency factor (70 aa).

Belongs to the UPF0161 family.

It localises to the cell membrane. In terms of biological role, could be involved in insertion of integral membrane proteins into the membrane. The sequence is that of Putative membrane protein insertion efficiency factor from Lachnoclostridium phytofermentans (strain ATCC 700394 / DSM 18823 / ISDg) (Clostridium phytofermentans).